We begin with the raw amino-acid sequence, 212 residues long: MKNVDDLIDDAAALADRGLSRGEIADELNVSRETASWLVERADTNASVAATDTDDSPRDVHVDWSTIGEAGARLSAIGIALADALRDHSHDVDLVVGIEKAGVPLATATANELGTDLATYTPRKHQWDEGDMADLGGSFSRNFASVEDRDCFVVDDTVTSGTTITETIQAVREAGGTPVACGVLADKQGLGDVDGTPIEALLQVIRVGSGDD.

It belongs to the purine/pyrimidine phosphoribosyltransferase family. GfcR subfamily.

DNA-binding transcriptional regulator that functions as a regulator of central sugar catabolic pathways. The sequence is that of Transcriptional regulator GfcR from Halobacterium salinarum (strain ATCC 29341 / DSM 671 / R1).